The chain runs to 63 residues: Conotoxin Pn-B01411 (63 aa).

Residues 1 to 22 form the signal peptide; that stretch reads MRCFPVFIILLLLMASAPSFDA. The propeptide occupies 23 to 49; sequence RPKTEDDVPLSSFRDNLKRTLRTLLDP. Residue Ile62 is modified to Isoleucine amide.

This sequence belongs to the conotoxin T superfamily. Post-translationally, contains 2 disulfide bonds that can be either 'C1-C3, C2-C4' or 'C1-C4, C2-C3', since these disulfide connectivities have been observed for conotoxins with cysteine framework V (for examples, see AC P0DQQ7 and AC P81755). In terms of tissue distribution, expressed by the venom duct.

The protein resides in the secreted. In Conus pennaceus (Feathered cone), this protein is Conotoxin Pn-B01411.